The following is a 185-amino-acid chain: Transcription factor E (185 aa).

The region spanning 5–88 (KNKELLEIAQ…YWRLETKKLP (84 aa)) is the HTH TFE/IIEalpha-type domain.

Belongs to the TFE family. In terms of assembly, monomer. Interaction with RNA polymerase subunits RpoF and RpoE is necessary for Tfe stimulatory transcription activity. Able to interact with Tbp and RNA polymerase in the absence of DNA promoter. Interacts both with the preinitiation and elongation complexes.

Transcription factor that plays a role in the activation of archaeal genes transcribed by RNA polymerase. Facilitates transcription initiation by enhancing TATA-box recognition by TATA-box-binding protein (Tbp), and transcription factor B (Tfb) and RNA polymerase recruitment. Not absolutely required for transcription in vitro, but particularly important in cases where Tbp or Tfb function is not optimal. It dynamically alters the nucleic acid-binding properties of RNA polymerases by stabilizing the initiation complex and destabilizing elongation complexes. Seems to translocate with the RNA polymerase following initiation and acts by binding to the non template strand of the transcription bubble in elongation complexes. This Thermococcus kodakarensis (strain ATCC BAA-918 / JCM 12380 / KOD1) (Pyrococcus kodakaraensis (strain KOD1)) protein is Transcription factor E.